The chain runs to 858 residues: Zinc finger protein ZXDC (858 aa).

Disordered regions lie at residues 1-127 (MDLP…APAG) and 151-174 (PGPATAGAAAPRRAPQASGPSTPG). 3 stretches are compositionally biased toward low complexity: residues 23–35 (PLRRAPAPLGASP), 84–97 (GGAAAEAAGSQEAE), and 151–171 (PGPATAGAAAPRRAPQASGPS). Residue Ser34 is modified to Phosphoserine. Phosphothreonine is present on Thr172. 10 C2H2-type zinc fingers span residues 175 to 199 (YRCPEPQCALAFAKKHQLKVHLLTH), 208 to 232 (FKCPLEGCGWAFTTSYKLKRHLQSH), 238 to 262 (FGCPVGGCGKKFTTVYNLKAHMKGH), 268 to 290 (FKCEVCAERFPTHAKLSSHQRSH), 297 to 321 (YKCDFPGCEKTFITVSALFSHNRAH), 328 to 352 (FSCSFPGCSKQYDKACRLKIHLRSH), 358 to 382 (FICDSDSCGWTFTSMSKLLRHRRKH), 388 to 412 (FTCPVEGCGKSFTRAEHLKGHSITH), 418 to 442 (FECPVEGCCARFSARSSLYIHSKKH), and 451 to 476 (SRCPVSTCNRLFTSKHSMKAHMVRQH). The tract at residues 579–688 (DSPLVLGTAA…HGLPQSTLPS (110 aa)) is required for transcriptional activation. Residue Lys660 forms a Glycyl lysine isopeptide (Lys-Gly) (interchain with G-Cter in SUMO) linkage. Disordered stretches follow at residues 660-696 (KVEPDSPSRPGAVGQQEGSHGLPQSTLPSPAEQHGAQ), 726-756 (KEKKQRGAGSNAGASQSTQRKIKEGKMSPPH), and 837-858 (GGPAGPEATQFPGSTINLQDLQ). The residue at position 665 (Ser665) is a Phosphoserine. The span at 675–687 (QEGSHGLPQSTLP) shows a compositional bias: polar residues. The interaction with CIITA stretch occupies residues 781 to 858 (PAAGVQCGAQ…GSTINLQDLQ (78 aa)). Residues 847–858 (FPGSTINLQDLQ) show a composition bias toward polar residues.

Belongs to the ZXD family. As to quaternary structure, self-associates. Interacts with ZXDA and CIITA. In terms of processing, sumoylated at Lys-660 with SUMO1, SUMO2 and SUMO3; sumoylation enhances the activity of the transcriptional activation domain. As to expression, expressed at high levels in heart, kidney, liver and testis, at moderate levels in brain and stomach, and at low levels in lung, muscle, placenta, small intestine and spleen.

The protein resides in the nucleus. Its function is as follows. Cooperates with CIITA to promote transcription of MHC class I and MHC class II genes. This Homo sapiens (Human) protein is Zinc finger protein ZXDC (ZXDC).